The following is a 280-amino-acid chain: MQRLHLHLLSDSTGETLEMIAKAALAQFDGADVVRHFWPMVRSMQHLDRIMGEIAANPGLVLYTLVNAETRERLEQRCAALGLPSVAALDAVTDALQQQLGIQAKGRPGRQHMMDEAYFARVDAIQFTIAHDDGVGWENWEEADIVLAGVSRSSKTPTSIYLANRGYKVANIPIVVESPPPSMLFSLRRPLVVGLTTSPERLIAVRRNRLLSLNQAPETAYVDNEQVTREVQFARRMFADNGWPVIDVSRRSIEETAAAVINLYNERTAAGASGDGVKPI.

149-156 serves as a coordination point for ADP; it reads GVSRSSKT.

This sequence belongs to the pyruvate, phosphate/water dikinase regulatory protein family. PDRP subfamily.

The enzyme catalyses N(tele)-phospho-L-histidyl/L-threonyl-[pyruvate, phosphate dikinase] + ADP = N(tele)-phospho-L-histidyl/O-phospho-L-threonyl-[pyruvate, phosphate dikinase] + AMP + H(+). It catalyses the reaction N(tele)-phospho-L-histidyl/O-phospho-L-threonyl-[pyruvate, phosphate dikinase] + phosphate + H(+) = N(tele)-phospho-L-histidyl/L-threonyl-[pyruvate, phosphate dikinase] + diphosphate. Bifunctional serine/threonine kinase and phosphorylase involved in the regulation of the pyruvate, phosphate dikinase (PPDK) by catalyzing its phosphorylation/dephosphorylation. The protein is Putative pyruvate, phosphate dikinase regulatory protein of Novosphingobium aromaticivorans (strain ATCC 700278 / DSM 12444 / CCUG 56034 / CIP 105152 / NBRC 16084 / F199).